The primary structure comprises 426 residues: Phosphomethylpyrimidine synthase (426 aa).

Substrate-binding positions include Asn65, Met94, Tyr123, His162, 184–186, 225–228, and Glu264; these read SRG and DGMR. His268 lines the Zn(2+) pocket. Tyr291 is a binding site for substrate. His332 is a Zn(2+) binding site. The [4Fe-4S] cluster site is built by Cys408, Cys411, and Cys415.

The protein belongs to the ThiC family. Requires [4Fe-4S] cluster as cofactor.

It carries out the reaction 5-amino-1-(5-phospho-beta-D-ribosyl)imidazole + S-adenosyl-L-methionine = 4-amino-2-methyl-5-(phosphooxymethyl)pyrimidine + CO + 5'-deoxyadenosine + formate + L-methionine + 3 H(+). The protein operates within cofactor biosynthesis; thiamine diphosphate biosynthesis. In terms of biological role, catalyzes the synthesis of the hydroxymethylpyrimidine phosphate (HMP-P) moiety of thiamine from aminoimidazole ribotide (AIR) in a radical S-adenosyl-L-methionine (SAM)-dependent reaction. The sequence is that of Phosphomethylpyrimidine synthase from Methanococcus aeolicus (strain ATCC BAA-1280 / DSM 17508 / OCM 812 / Nankai-3).